The chain runs to 102 residues: MDIKQTAVAGSLESSDIMVTVNPSDVQGITVQLESSVEKQFGQQIRKVIEETLKHLGVKAASVEAVDKGALDCTIKARTITAVHRAAQVEVYDWKEIDSWNA.

Position 14 is an O-(phosphoribosyl dephospho-coenzyme A)serine (serine 14).

The protein belongs to the CitD family. In terms of assembly, oligomer with a subunit composition of (alpha,beta,gamma)6.

It is found in the cytoplasm. Covalent carrier of the coenzyme of citrate lyase. In Streptococcus mutans serotype c (strain ATCC 700610 / UA159), this protein is Citrate lyase acyl carrier protein.